The following is a 202-amino-acid chain: Cytochrome c oxidase assembly protein CtaG (202 aa).

Over 1-14 (MTSPANPSEVTRDR) the chain is Cytoplasmic. The chain crosses the membrane as a helical; Signal-anchor for type II membrane protein span at residues 15–37 (RNRGVAFVCAGVFVAMVGMSFAA). The Periplasmic segment spans residues 38 to 202 (VPLYRLFCQV…GAAKTQKLGG (165 aa)).

Belongs to the COX11/CtaG family.

Its subcellular location is the cell inner membrane. In terms of biological role, exerts its effect at some terminal stage of cytochrome c oxidase synthesis, probably by being involved in the insertion of the copper B into subunit I. This is Cytochrome c oxidase assembly protein CtaG from Chelativorans sp. (strain BNC1).